A 320-amino-acid polypeptide reads, in one-letter code: Acetyl-coenzyme A carboxylase carboxyl transferase subunit alpha (320 aa).

The region spanning Lys-41–Glu-295 is the CoA carboxyltransferase C-terminal domain.

The protein belongs to the AccA family. As to quaternary structure, acetyl-CoA carboxylase is a heterohexamer composed of biotin carboxyl carrier protein (AccB), biotin carboxylase (AccC) and two subunits each of ACCase subunit alpha (AccA) and ACCase subunit beta (AccD).

The protein localises to the cytoplasm. The catalysed reaction is N(6)-carboxybiotinyl-L-lysyl-[protein] + acetyl-CoA = N(6)-biotinyl-L-lysyl-[protein] + malonyl-CoA. The protein operates within lipid metabolism; malonyl-CoA biosynthesis; malonyl-CoA from acetyl-CoA: step 1/1. Functionally, component of the acetyl coenzyme A carboxylase (ACC) complex. First, biotin carboxylase catalyzes the carboxylation of biotin on its carrier protein (BCCP) and then the CO(2) group is transferred by the carboxyltransferase to acetyl-CoA to form malonyl-CoA. In Rhodopseudomonas palustris (strain ATCC BAA-98 / CGA009), this protein is Acetyl-coenzyme A carboxylase carboxyl transferase subunit alpha.